Consider the following 556-residue polypeptide: Glypican-4 (556 aa).

A signal peptide spans 1 to 18; the sequence is MARFGLPALLCTLAVLSA. Serine 357 is modified (phosphoserine). 3 O-linked (Xyl...) (glycosaminoglycan) serine glycosylation sites follow: serine 494, serine 498, and serine 500. N-linked (GlcNAc...) asparagine glycosylation is present at asparagine 514. The GPI-anchor amidated serine moiety is linked to residue serine 529. Positions 530–556 are cleaved as a propeptide — removed in mature form; that stretch reads AGVRPGAQAYLLTVFCILFLVMQREWR.

Belongs to the glypican family.

The protein localises to the cell membrane. It localises to the secreted. The protein resides in the extracellular space. Its function is as follows. Cell surface proteoglycan that bears heparan sulfate. May be involved in the development of kidney tubules and of the central nervous system. This chain is Glypican-4 (GPC4), found in Homo sapiens (Human).